Reading from the N-terminus, the 436-residue chain is Gamma-glutamyl phosphate reductase (436 aa).

This sequence belongs to the gamma-glutamyl phosphate reductase family.

The protein localises to the cytoplasm. The enzyme catalyses L-glutamate 5-semialdehyde + phosphate + NADP(+) = L-glutamyl 5-phosphate + NADPH + H(+). The protein operates within amino-acid biosynthesis; L-proline biosynthesis; L-glutamate 5-semialdehyde from L-glutamate: step 2/2. In terms of biological role, catalyzes the NADPH-dependent reduction of L-glutamate 5-phosphate into L-glutamate 5-semialdehyde and phosphate. The product spontaneously undergoes cyclization to form 1-pyrroline-5-carboxylate. The polypeptide is Gamma-glutamyl phosphate reductase (Prochlorococcus marinus (strain AS9601)).